The sequence spans 209 residues: Putative AgrB-like protein (209 aa).

The next 5 helical transmembrane spans lie at 49–71 (ILFL…AAFG), 82–102 (AKNS…GAYL), 105–125 (YLLF…LLLF), 149–169 (QAVL…DELI), and 173–193 (ISLS…KVLG).

This sequence belongs to the AgrB family.

Its subcellular location is the cell membrane. May be involved in the proteolytic processing of a quorum sensing system signal molecule precursor. The chain is Putative AgrB-like protein from Clostridium acetobutylicum (strain ATCC 824 / DSM 792 / JCM 1419 / IAM 19013 / LMG 5710 / NBRC 13948 / NRRL B-527 / VKM B-1787 / 2291 / W).